Here is a 499-residue protein sequence, read N- to C-terminus: Tektin-like protein 1 (499 aa).

Coiled coils occupy residues 197 to 227 (SMLT…LKTL) and 297 to 317 (LNEA…MAKN). Y372 bears the Phosphotyrosine mark.

In terms of assembly, microtubule inner protein component of sperm flagellar doublet microtubules.

Its subcellular location is the cytoplasm. It localises to the cytoskeleton. It is found in the flagellum axoneme. Functionally, microtubule inner protein (MIP) part of the dynein-decorated doublet microtubules (DMTs) in sperm flagellar axoneme, which is required for motile flagellum beating. Forms an extensive interaction network cross-linking the lumen of axonemal doublet microtubules. In Homo sapiens (Human), this protein is Tektin-like protein 1.